The primary structure comprises 470 residues: 6-phospho-beta-galactosidase (470 aa).

Residues Gln-19, His-116, Asn-159, Glu-160, and Asn-297 each contribute to the D-galactose 6-phosphate site. The active-site Proton donor is the Glu-160. Glu-375 serves as the catalytic Nucleophile. D-galactose 6-phosphate is bound by residues Ser-430, Trp-431, Lys-437, and Tyr-439.

Belongs to the glycosyl hydrolase 1 family.

The catalysed reaction is a 6-phospho-beta-D-galactoside + H2O = D-galactose 6-phosphate + an alcohol. Its pathway is carbohydrate metabolism; lactose degradation; D-galactose 6-phosphate and beta-D-glucose from lactose 6-phosphate: step 1/1. This is 6-phospho-beta-galactosidase from Staphylococcus aureus (strain Mu3 / ATCC 700698).